The following is a 745-amino-acid chain: Phosphoribosylformylglycinamidine synthase subunit PurL (745 aa).

Histidine 41 is an active-site residue. 2 residues coordinate ATP: tyrosine 44 and lysine 83. Glutamate 85 contributes to the Mg(2+) binding site. Substrate is bound by residues serine 86–histidine 89 and arginine 108. Catalysis depends on histidine 87, which acts as the Proton acceptor. Residue aspartate 109 coordinates Mg(2+). Residue glutamine 232 participates in substrate binding. Aspartate 260 is a binding site for Mg(2+). Glutamate 304 to glutamine 306 contacts substrate. Aspartate 494 and glycine 531 together coordinate ATP. Asparagine 532 contributes to the Mg(2+) binding site. Residue serine 534 participates in substrate binding.

This sequence belongs to the FGAMS family. Monomer. Part of the FGAM synthase complex composed of 1 PurL, 1 PurQ and 2 PurS subunits.

The protein localises to the cytoplasm. The enzyme catalyses N(2)-formyl-N(1)-(5-phospho-beta-D-ribosyl)glycinamide + L-glutamine + ATP + H2O = 2-formamido-N(1)-(5-O-phospho-beta-D-ribosyl)acetamidine + L-glutamate + ADP + phosphate + H(+). Its pathway is purine metabolism; IMP biosynthesis via de novo pathway; 5-amino-1-(5-phospho-D-ribosyl)imidazole from N(2)-formyl-N(1)-(5-phospho-D-ribosyl)glycinamide: step 1/2. Part of the phosphoribosylformylglycinamidine synthase complex involved in the purines biosynthetic pathway. Catalyzes the ATP-dependent conversion of formylglycinamide ribonucleotide (FGAR) and glutamine to yield formylglycinamidine ribonucleotide (FGAM) and glutamate. The FGAM synthase complex is composed of three subunits. PurQ produces an ammonia molecule by converting glutamine to glutamate. PurL transfers the ammonia molecule to FGAR to form FGAM in an ATP-dependent manner. PurS interacts with PurQ and PurL and is thought to assist in the transfer of the ammonia molecule from PurQ to PurL. This chain is Phosphoribosylformylglycinamidine synthase subunit PurL, found in Aquifex aeolicus (strain VF5).